The following is a 425-amino-acid chain: Serine--tRNA ligase (425 aa).

228 to 230 serves as a coordination point for L-serine; that stretch reads TAE. 259–261 contacts ATP; that stretch reads RSE. Glu-282 contributes to the L-serine binding site. 346–349 provides a ligand contact to ATP; the sequence is EIAS. Ser-382 provides a ligand contact to L-serine.

Belongs to the class-II aminoacyl-tRNA synthetase family. Type-1 seryl-tRNA synthetase subfamily. As to quaternary structure, homodimer. The tRNA molecule binds across the dimer.

The protein localises to the cytoplasm. It carries out the reaction tRNA(Ser) + L-serine + ATP = L-seryl-tRNA(Ser) + AMP + diphosphate + H(+). It catalyses the reaction tRNA(Sec) + L-serine + ATP = L-seryl-tRNA(Sec) + AMP + diphosphate + H(+). Its pathway is aminoacyl-tRNA biosynthesis; selenocysteinyl-tRNA(Sec) biosynthesis; L-seryl-tRNA(Sec) from L-serine and tRNA(Sec): step 1/1. Catalyzes the attachment of serine to tRNA(Ser). Is also able to aminoacylate tRNA(Sec) with serine, to form the misacylated tRNA L-seryl-tRNA(Sec), which will be further converted into selenocysteinyl-tRNA(Sec). The polypeptide is Serine--tRNA ligase (Rickettsia canadensis (strain McKiel)).